Here is a 92-residue protein sequence, read N- to C-terminus: Small ribosomal subunit protein uS19 (92 aa).

Belongs to the universal ribosomal protein uS19 family.

Its function is as follows. Protein S19 forms a complex with S13 that binds strongly to the 16S ribosomal RNA. This Picosynechococcus sp. (strain ATCC 27264 / PCC 7002 / PR-6) (Agmenellum quadruplicatum) protein is Small ribosomal subunit protein uS19.